We begin with the raw amino-acid sequence, 333 residues long: NADH-quinone oxidoreductase subunit H (333 aa).

8 consecutive transmembrane segments (helical) span residues 15-35, 88-108, 117-137, 159-179, 191-211, 239-259, 274-296, and 313-333; these read FFIF…FVTY, FILA…VIPF, IGVG…GVVT, ISYE…AGSL, VWYI…AVAE, WAFF…LITV, IPGA…WFRV, and VLLP…ELFF.

This sequence belongs to the complex I subunit 1 family. NDH-1 is composed of 14 different subunits. Subunits NuoA, H, J, K, L, M, N constitute the membrane sector of the complex.

The protein localises to the cell membrane. The catalysed reaction is a quinone + NADH + 5 H(+)(in) = a quinol + NAD(+) + 4 H(+)(out). NDH-1 shuttles electrons from NADH, via FMN and iron-sulfur (Fe-S) centers, to quinones in the respiratory chain. The immediate electron acceptor for the enzyme in this species is believed to be ubiquinone. Couples the redox reaction to proton translocation (for every two electrons transferred, four hydrogen ions are translocated across the cytoplasmic membrane), and thus conserves the redox energy in a proton gradient. This subunit may bind ubiquinone. This chain is NADH-quinone oxidoreductase subunit H, found in Bacillus cereus (strain G9842).